Reading from the N-terminus, the 338-residue chain is Ketol-acid reductoisomerase (NADP(+)) (338 aa).

In terms of domain architecture, KARI N-terminal Rossmann spans 1 to 181; sequence MKVYYDSDAD…GGGRAGIIET (181 aa). NADP(+) contacts are provided by residues 24–27, Arg-47, Ser-50, Ser-52, and 82–85; these read YGSQ and DEHQ. Residue His-107 is part of the active site. Gly-133 contacts NADP(+). Residues 182 to 327 form the KARI C-terminal knotted domain; it reads SFKEETETDL…AKLRAMMPWI (146 aa). Residues Asp-190, Glu-194, Glu-226, and Glu-230 each coordinate Mg(2+). Substrate is bound at residue Ser-251.

This sequence belongs to the ketol-acid reductoisomerase family. Requires Mg(2+) as cofactor.

The catalysed reaction is (2R)-2,3-dihydroxy-3-methylbutanoate + NADP(+) = (2S)-2-acetolactate + NADPH + H(+). It carries out the reaction (2R,3R)-2,3-dihydroxy-3-methylpentanoate + NADP(+) = (S)-2-ethyl-2-hydroxy-3-oxobutanoate + NADPH + H(+). Its pathway is amino-acid biosynthesis; L-isoleucine biosynthesis; L-isoleucine from 2-oxobutanoate: step 2/4. It functions in the pathway amino-acid biosynthesis; L-valine biosynthesis; L-valine from pyruvate: step 2/4. Involved in the biosynthesis of branched-chain amino acids (BCAA). Catalyzes an alkyl-migration followed by a ketol-acid reduction of (S)-2-acetolactate (S2AL) to yield (R)-2,3-dihydroxy-isovalerate. In the isomerase reaction, S2AL is rearranged via a Mg-dependent methyl migration to produce 3-hydroxy-3-methyl-2-ketobutyrate (HMKB). In the reductase reaction, this 2-ketoacid undergoes a metal-dependent reduction by NADPH to yield (R)-2,3-dihydroxy-isovalerate. The sequence is that of Ketol-acid reductoisomerase (NADP(+)) from Magnetococcus marinus (strain ATCC BAA-1437 / JCM 17883 / MC-1).